The following is a 491-amino-acid chain: Regulatory protein NPR5 (491 aa).

The BTB domain occupies 26–116 (SDVTFSVEGR…LYSGQVSIVP (91 aa)). The segment at 122 to 136 (RPNCGERGCWHTHCS) adopts a C2HC NPR-type zinc-finger fold. C125, C130, H132, and C135 together coordinate Zn(2+). ANK repeat units follow at residues 254-283 (QKIR…LNLD), 284-313 (ESLA…DVNY), 318-347 (AGKT…DPNV), and 351-385 (GGIT…KLRL). Residues 400 to 491 (EEGNNSNNQN…MYHHHHQHHF (92 aa)) are disordered. The segment covering 403–413 (NNSNNQNNDNN) has biased composition (low complexity). Residues 457–470 (DQGDDHNSQREGMS) are compositionally biased toward basic and acidic residues.

This sequence belongs to the plant 'ANKYRIN-BTB/POZ' family. 'NOOT-BOP-COCH-like' (NBCL) subfamily. As to quaternary structure, homodimer or heterodimer with BOP1. Interacts with PAN. Highly expressed in young floral meristem. Predominantly expressed in the boundary between floral meristem (FM) and sepal primordia.

It is found in the cytoplasm. The protein resides in the nucleus. The protein operates within protein modification; protein ubiquitination. In terms of biological role, may act as a substrate-specific adapter of an E3 ubiquitin-protein ligase complex (CUL3-RBX1-BTB) which mediates the ubiquitination and subsequent proteasomal degradation of target proteins. Acts redundantly with BOP2. BOP1/2 promote leaf and floral meristem fate and determinacy in a pathway targeting AP1 and AGL24. BOP1/2 act as transcriptional co-regulators through direct interaction with TGA factors, including PAN, a direct regulator of AP1. Controls lateral organ fate through positive regulation of adaxial-abaxial polarity genes ATHB-14/PHB, YAB1/FIL and YAB3, and through positive regulation of LOB domain-containing genes LOB, LBD6/AS2 and LBD36. Promotes and maintains a developmentally determinate state in leaf cells through the negative regulation of JAG, JGL and class I KNOX genes. Is also involved in nectary development, formation of normal abscission zones (AZs) and suppression of bract formation, probably by regulating the cell wall disorganization. The chain is Regulatory protein NPR5 from Arabidopsis thaliana (Mouse-ear cress).